The following is a 219-amino-acid chain: Occludin/ELL domain-containing protein 1 (219 aa).

The segment at M1 to T110 is disordered. Residues L17–R43 are compositionally biased toward low complexity. The span at V72 to G93 shows a compositional bias: basic and acidic residues. An OCEL domain is found at P100–D210.

Belongs to the ELL/occludin family.

In Mus musculus (Mouse), this protein is Occludin/ELL domain-containing protein 1 (Ocel1).